The following is a 628-amino-acid chain: MAEARLLRRRRLCLAVPFVWVVAVAVSRVGANTEGDALYSLRQSLKDANNVLQSWDPTLVNPCTWFHVTCNPDNSVIRVDLGNAQLSGALVPQLGQLKNLQYLELYSNNISGTIPNELGNLTNLVSLDLYLNNFTGFIPETLGQLYKLRFLRLNNNSLSGSIPKSLTNITTLQVLDLSNNNLSGEVPSTGSFSLFTPISFANNKDLCGPGTTKPCPGAPPFSPPPPFNPPTPTVSQGDSKTGAIAGGVAAAAALLFAVPAIGFAWWRRRKPEEHFFDVPAEEDPEVHLGQLKRFSLRELQVATDNFSNKNILGRGGFGKVYKGRLADGSLVAVKRLKEERTPGGELQFQTEVEMISMAVHRNLLRLRGFCMTPTERLLVYPYMANGSVASRLRERQPNDPPLEWQTRTRIALGSARGLSYLHDHCDPKIIHRDVKAANILLDEDFEAVVGDFGLAKLMDYKDTHVTTAVRGTIGHIAPEYLSTGKSSEKTDVFGYGIMLLELITGQRAFDLARLANDDDVMLLDWVKGLLKEKKVEMLVDPDLQSGFVEHEVESLIQVALLCTQGSPMDRPKMSEVVRMLEGDGLAERWEEWQKVEVVRQEAELAPRHNDWIVDSTYNLRAMELSGPR.

The N-terminal stretch at 1 to 31 (MAEARLLRRRRLCLAVPFVWVVAVAVSRVGA) is a signal peptide. LRR repeat units follow at residues 97–121 (LKNL…LGNL), 123–144 (NLVS…TLGQ), 145–169 (LYKL…LTNI), and 170–194 (TTLQ…SFSL). N-linked (GlcNAc...) asparagine glycosylation is found at N109, N120, N133, N155, N168, and N181. The chain crosses the membrane as a helical span at residues 243–263 (AIAGGVAAAAALLFAVPAIGF). T303 bears the Phosphothreonine mark. In terms of domain architecture, Protein kinase spans 306–593 (FSNKNILGRG…GLAERWEEWQ (288 aa)). 312–320 (LGRGGFGKV) contacts ATP. Position 329 is a phosphoserine (S329). K334 lines the ATP pocket. Phosphothreonine is present on T350. Residues S356 and S387 each carry the phosphoserine modification. D433 (proton acceptor) is an active-site residue. T463, T466, and T472 each carry phosphothreonine. At S615 the chain carries Phosphoserine. Position 616 is a phosphothreonine (T616). S625 is modified (phosphoserine).

Belongs to the protein kinase superfamily. Ser/Thr protein kinase family. In terms of assembly, interacts with BRI1. Interacts with XA21, XA26/XA3 and FLS2. Autophosphorylated on serine and threonine residues. In terms of tissue distribution, expressed in flag leaves. Expressed in roots, shoot apex, leaf blades, leaf sheaths, panicles and flowers. Expressed leaves, stems, sheaths and flowers.

The protein resides in the cell membrane. It catalyses the reaction L-seryl-[protein] + ATP = O-phospho-L-seryl-[protein] + ADP + H(+). The catalysed reaction is L-threonyl-[protein] + ATP = O-phospho-L-threonyl-[protein] + ADP + H(+). In terms of biological role, LRR receptor kinase involved in positive regulation of somatic embryogenesis and defense response against the rice blast fungus pathogen Magnaporthe oryzae. Involved in the positive regulation of receptor kinase-mediated immunity. Required for immunity mediated by the LRR receptor kinases XA21 and XA26/XA3 which recognize effectors from the bacterial pathogen Xanthomonas oryzae pv. oryzae (Xoo). Required for the immune response mediated by the LRR receptor kinase FLS2 which recognizes specifically the bacterial flagellin (flg22) effector. Kinase activity and direct interaction with the immune receptors is critical for their function. Involved in the regulation of plant growth through the brassinosteroid (BR) signaling pathway. The sequence is that of LRR receptor kinase SERK2 from Oryza sativa subsp. japonica (Rice).